The following is a 251-amino-acid chain: tRNA (guanine-N(1)-)-methyltransferase (251 aa).

Residues G117 and 137–142 (IGDYVL) each bind S-adenosyl-L-methionine.

This sequence belongs to the RNA methyltransferase TrmD family. As to quaternary structure, homodimer.

The protein resides in the cytoplasm. It catalyses the reaction guanosine(37) in tRNA + S-adenosyl-L-methionine = N(1)-methylguanosine(37) in tRNA + S-adenosyl-L-homocysteine + H(+). Functionally, specifically methylates guanosine-37 in various tRNAs. The polypeptide is tRNA (guanine-N(1)-)-methyltransferase (Actinobacillus pleuropneumoniae serotype 5b (strain L20)).